Consider the following 208-residue polypeptide: CASP-like protein 4A4 (208 aa).

Residues 1–53 (MKELKDHVVVITYGPSSEASVTASPVSQQTPSLFAYSVTPSASRFSSRRASVH) are Cytoplasmic-facing. A helical membrane pass occupies residues 54 to 74 (VIGLVLRFITMVLCFVSALSL). Over 75 to 92 (AVNVQRPSKRHLTQNSSS) the chain is Extracellular. An N-linked (GlcNAc...) asparagine glycan is attached at N89. Residues 93 to 113 (FASYPELLYCFGVAVIGFVYT) form a helical membrane-spanning segment. Residues 114–141 (SLQTFKGVCDITHRGVLISEPLSDYISF) are Cytoplasmic-facing. Residues 142 to 162 (IFDQVICYLLVSSSSVAIAWI) form a helical membrane-spanning segment. Residues 163-176 (QHINEDAIKTLRNN) are Extracellular-facing. Residue N175 is glycosylated (N-linked (GlcNAc...) asparagine). A helical transmembrane segment spans residues 177-197 (SIVSVSMSFSAFLVLTLSGLL). Over 198–208 (SGYKLCKRFMW) the chain is Cytoplasmic.

It belongs to the Casparian strip membrane proteins (CASP) family. In terms of assembly, homodimer and heterodimers.

It is found in the cell membrane. This Arabidopsis thaliana (Mouse-ear cress) protein is CASP-like protein 4A4.